The chain runs to 645 residues: MQNKRNQSRVLWLLLIYITIGIFIYVGVNSLIGTPDVSKIEYSELVQMLEDKKIVSLEIEDSGYARARDNRGLYYETYAPTLLSDQQYVYGLANQGIEIKYVRSLENSWWISILTFLLPVFLLIFLFTFLFRSSGGGANQGMNFIKSPAKKYDPKKTRTTFNDVAGVKEAKEELTDVVKFLKDPKVFNRLGARMPKGVLLVGEPGTGKTLLARAVAGEAGVPFFYISGSDFVELFVGVGAARVRDLFNQAKANAPAIIFIDEIDAVGRQRGSGLGGGHDEREQTLNSILVEMDGFDPSIGIIVMAATNRPDVLDKALLRPGRFDKKVVIDRPDAEGRKDILKIHFRGKKIAPDVDLEVLARATPGFVGADLENLVNEAALLAARNGEKFITMKDCEEAIERVIVGPERKTRVLSEQEKEVVAYHELGHAILGTILPNADPVHKVTIIPRGYAALGYTLQLPSEDRYLMNKSEILDDIAVMLAGRAAEEIIFDEITSGAENDLKRATEMARRMVESFGMSEKIGPVAWASESEETFLARELFREKNYSDETAKELDSEVKQIINKSYEKAKSVLLENKEKLQFIAQYLLKKETISGQELRDLLQKDTDDLKEYVENLGVSSTQEEAKVVNYEYLSRENNLIERKGI.

Topologically, residues methionine 1–leucine 11 are cytoplasmic. A helical membrane pass occupies residues tryptophan 12 to isoleucine 32. The Periplasmic portion of the chain corresponds to glycine 33 to tryptophan 110. The helical transmembrane segment at isoleucine 111 to phenylalanine 131 threads the bilayer. At arginine 132 to isoleucine 645 the chain is on the cytoplasmic side. Glycine 202–threonine 209 provides a ligand contact to ATP. Zn(2+) is bound at residue histidine 424. Glutamate 425 is a catalytic residue. 2 residues coordinate Zn(2+): histidine 428 and aspartate 501.

It in the central section; belongs to the AAA ATPase family. The protein in the C-terminal section; belongs to the peptidase M41 family. Homohexamer. The cofactor is Zn(2+).

The protein localises to the cell inner membrane. Functionally, acts as a processive, ATP-dependent zinc metallopeptidase for both cytoplasmic and membrane proteins. Plays a role in the quality control of integral membrane proteins. The sequence is that of ATP-dependent zinc metalloprotease FtsH 3 from Petrotoga mobilis (strain DSM 10674 / SJ95).